A 162-amino-acid polypeptide reads, in one-letter code: Large ribosomal subunit protein uL11 (162 aa).

Positions 1–27 (MAGTIEVLVPGGEANPGPPLGPELGPT) are disordered.

This sequence belongs to the universal ribosomal protein uL11 family. In terms of assembly, part of the 50S ribosomal subunit. Forms part of the ribosomal stalk which helps the ribosome interact with GTP-bound translation factors. Forms a heptameric L10(L12)2(L12)2(L12)2 complex, where L10 forms an elongated spine to which 3 L12 dimers bind in a sequential fashion.

Its function is as follows. Forms part of the ribosomal stalk which helps the ribosome interact with GTP-bound translation factors. The sequence is that of Large ribosomal subunit protein uL11 from Haloarcula marismortui (strain ATCC 43049 / DSM 3752 / JCM 8966 / VKM B-1809) (Halobacterium marismortui).